A 176-amino-acid chain; its full sequence is ATP synthase subunit delta (176 aa).

It belongs to the ATPase delta chain family. In terms of assembly, F-type ATPases have 2 components, F(1) - the catalytic core - and F(0) - the membrane proton channel. F(1) has five subunits: alpha(3), beta(3), gamma(1), delta(1), epsilon(1). F(0) has three main subunits: a(1), b(2) and c(10-14). The alpha and beta chains form an alternating ring which encloses part of the gamma chain. F(1) is attached to F(0) by a central stalk formed by the gamma and epsilon chains, while a peripheral stalk is formed by the delta and b chains.

The protein localises to the cell inner membrane. Its function is as follows. F(1)F(0) ATP synthase produces ATP from ADP in the presence of a proton or sodium gradient. F-type ATPases consist of two structural domains, F(1) containing the extramembraneous catalytic core and F(0) containing the membrane proton channel, linked together by a central stalk and a peripheral stalk. During catalysis, ATP synthesis in the catalytic domain of F(1) is coupled via a rotary mechanism of the central stalk subunits to proton translocation. This protein is part of the stalk that links CF(0) to CF(1). It either transmits conformational changes from CF(0) to CF(1) or is implicated in proton conduction. This Polaromonas sp. (strain JS666 / ATCC BAA-500) protein is ATP synthase subunit delta.